The chain runs to 704 residues: MTIEDLPDIPLEGSSLIGRYPFLFTGSDTSVIFSISAAPMPSDCEFSFFDPNDASCQEILFDPKTSVSELFAILRQWVPQVQQNIDIIGNEILKRGCNVNDRDGLTDMTLLHYTCKSGAHGIGDIETAVKFAAQLIDLGADASLRSRWTNMNALHYASYFDVPELIRVILKTSKPKDVDATCSDFNFGTALHIAAHNLCAGAVKTLLELGANPAFRNDKGQIPAEVVPDPVDMPLEMADAAAIAKEIKQMLLDAVPLPCTSAKAVLPNSDHTTSRAMLTSLGLKLGDRVVIAGQKVGTLRFCGTTEFASGQWAGIELDEPEGKNNGSVGRVQYFKCAPKYGIFAPLSKISKLKDGRKTTTHTPSTRATPHARSQKVDVAHFTSRVNSGLTTSKKETASESTLTLPPSEEPKTVAENDAAQPGSMSSSSSSSSLDHKQSYPKKLTTSSGGKKTLSKSPSLPSRASAGLKSSATSAANNSHHEGALHLGERVLVVGQRVGTIKFFGTTNFAPGYWYGIELEKPHGKNDGSVGGVQYFSCSPRYGIFAPPSRVQRLSDSLDTLSEISSNKQNHSYPGFRRSFSTTSASSQKEINRRNAFAKTKTTLRRSWSSSTTAGGLEGTVKLHEGSQVLLTSSNEMATVRYVGPTDFASGIWLGLELRSAKGKNDGAVGDKRYFTCKPNYGVLVRPSRVTYRGISGSKLIDENC.

3 ANK repeats span residues 65 to 101, 149 to 180, and 186 to 215; these read TSVS…NVND, TNMN…DVDA, and NFGT…NPAF. One can recognise a CAP-Gly 1 domain in the interval 303–345; that stretch reads GTTEFASGQWAGIELDEPEGKNNGSVGRVQYFKCAPKYGIFAP. The disordered stretch occupies residues 353-479; the sequence is KDGRKTTTHT…SATSAANNSH (127 aa). Low complexity-rich tracts occupy residues 360 to 371, 423 to 432, and 440 to 461; these read THTPSTRATPHA, SMSSSSSSSS, and PKKL…SLPS. Residues 504–546 enclose the CAP-Gly 2 domain; it reads GTTNFAPGYWYGIELEKPHGKNDGSVGGVQYFSCSPRYGIFAP. A phosphoserine mark is found at Ser556 and Ser608. Residues 643–685 form the CAP-Gly 3 domain; the sequence is GPTDFASGIWLGLELRSAKGKNDGAVGDKRYFTCKPNYGVLVR.

This chain is CAP-Gly domain-containing linker protein 4 (Clip4), found in Mus musculus (Mouse).